Consider the following 749-residue polypeptide: Protein SEY1 homolog 2 (749 aa).

The Cytoplasmic portion of the chain corresponds to 1–671 (MIKNYGDRYH…QKHKQDFLQN (671 aa)). The region spanning 40–265 (GKNYNIVSII…YEKNVRWSDM (226 aa)) is the GB1/RHD3-type G domain. Residue 50-57 (GSQSTGKS) coordinates GTP. Positions 445–465 (NQLKAFVEAQLATFKQQLDNI) form a coiled coil. Residues 672–692 (IPKPFWFLLLFFMYDDVLRWM) form a helical membrane-spanning segment. The Lumenal segment spans residues 693–695 (GNP). Residues 696–716 (LFLYPILIILCFVGFCIAIGL) traverse the membrane as a helical segment. At 717–749 (HSLPKLAFQWVFRTLNQAVIPIIFGGISKLKGS) the chain is on the cytoplasmic side.

It belongs to the TRAFAC class dynamin-like GTPase superfamily. GB1/RHD3 GTPase family. RHD3 subfamily.

Its subcellular location is the endoplasmic reticulum membrane. Functionally, probable GTP-binding protein that may be involved in cell development. This Paramecium tetraurelia protein is Protein SEY1 homolog 2.